The following is a 496-amino-acid chain: Amidophosphoribosyltransferase (496 aa).

A propeptide spanning residues 1-21 (MNQSHSFPTDDPLDGDTLHEE) is cleaved from the precursor. The Nucleophile role is filled by Cys22. The Glutamine amidotransferase type-2 domain maps to 22–241 (CGVFGILGHP…NGEVIICEIQ (220 aa)).

This sequence in the C-terminal section; belongs to the purine/pyrimidine phosphoribosyltransferase family.

The enzyme catalyses 5-phospho-beta-D-ribosylamine + L-glutamate + diphosphate = 5-phospho-alpha-D-ribose 1-diphosphate + L-glutamine + H2O. The protein operates within purine metabolism; IMP biosynthesis via de novo pathway; N(1)-(5-phospho-D-ribosyl)glycinamide from 5-phospho-alpha-D-ribose 1-diphosphate: step 1/2. Its function is as follows. Catalyzes the formation of phosphoribosylamine from phosphoribosylpyrophosphate (PRPP) and glutamine. This is Amidophosphoribosyltransferase from Rhizobium etli (strain ATCC 51251 / DSM 11541 / JCM 21823 / NBRC 15573 / CFN 42).